A 127-amino-acid polypeptide reads, in one-letter code: uncharacterized protein (127 aa).

2 helical membrane passes run 64 to 84 (GYYITNLICIVVGLFLYFGYL) and 101 to 118 (FFHFFFTILAVTSRAIYY).

Its subcellular location is the membrane. This is an uncharacterized protein from Saccharomyces cerevisiae (strain ATCC 204508 / S288c) (Baker's yeast).